A 121-amino-acid polypeptide reads, in one-letter code: UPF0091 protein PH1428 (121 aa).

The protein belongs to the UPF0091 family.

This chain is UPF0091 protein PH1428, found in Pyrococcus horikoshii (strain ATCC 700860 / DSM 12428 / JCM 9974 / NBRC 100139 / OT-3).